A 100-amino-acid chain; its full sequence is Integration host factor subunit alpha (100 aa).

Belongs to the bacterial histone-like protein family. As to quaternary structure, heterodimer of an alpha and a beta chain.

Its function is as follows. This protein is one of the two subunits of integration host factor, a specific DNA-binding protein that functions in genetic recombination as well as in transcriptional and translational control. The protein is Integration host factor subunit alpha of Ectopseudomonas mendocina (strain ymp) (Pseudomonas mendocina).